A 156-amino-acid polypeptide reads, in one-letter code: SsrA-binding protein (156 aa).

Belongs to the SmpB family.

The protein localises to the cytoplasm. Required for rescue of stalled ribosomes mediated by trans-translation. Binds to transfer-messenger RNA (tmRNA), required for stable association of tmRNA with ribosomes. tmRNA and SmpB together mimic tRNA shape, replacing the anticodon stem-loop with SmpB. tmRNA is encoded by the ssrA gene; the 2 termini fold to resemble tRNA(Ala) and it encodes a 'tag peptide', a short internal open reading frame. During trans-translation Ala-aminoacylated tmRNA acts like a tRNA, entering the A-site of stalled ribosomes, displacing the stalled mRNA. The ribosome then switches to translate the ORF on the tmRNA; the nascent peptide is terminated with the 'tag peptide' encoded by the tmRNA and targeted for degradation. The ribosome is freed to recommence translation, which seems to be the essential function of trans-translation. The protein is SsrA-binding protein of Clostridium botulinum (strain Alaska E43 / Type E3).